A 278-amino-acid polypeptide reads, in one-letter code: Bis(5'-nucleosyl)-tetraphosphatase, symmetrical (278 aa).

Belongs to the Ap4A hydrolase family.

The enzyme catalyses P(1),P(4)-bis(5'-adenosyl) tetraphosphate + H2O = 2 ADP + 2 H(+). Functionally, hydrolyzes diadenosine 5',5'''-P1,P4-tetraphosphate to yield ADP. This chain is Bis(5'-nucleosyl)-tetraphosphatase, symmetrical, found in Buchnera aphidicola subsp. Baizongia pistaciae (strain Bp).